The following is a 352-amino-acid chain: NAD-dependent protein deacetylase sirtuin-2 (352 aa).

At S16 the chain carries Phosphoserine. Residues 20 to 301 (RLLDELTLEG…LALAELLGWK (282 aa)) enclose the Deacetylase sirtuin-type domain. Residues 48-52 (AGIST) and 58-60 (DFR) contribute to the NAD(+) site. S63 is modified (phosphoserine). 130-133 (QNID) is an NAD(+) binding site. H150 acts as the Proton acceptor in catalysis. Zn(2+) contacts are provided by C158 and C163. S170 carries the phosphoserine modification. Residues C184 and C187 each contribute to the Zn(2+) site. Residues 225–226 (TS), 249–251 (NKE), and C287 each bind NAD(+). The tract at residues 314–352 (SIDAQSGAGVPNPSTSASPKKSPPPAKDEARTTEREKPQ) is disordered. Positions 324–333 (PNPSTSASPK) are enriched in low complexity. A phosphoserine mark is found at S331 and S335. Basic and acidic residues predominate over residues 339–352 (AKDEARTTEREKPQ).

Belongs to the sirtuin family. Class I subfamily. As to quaternary structure, interacts with CDC20, FOXO3 and FZR1. Associates with microtubules in primary cortical mature neurons. Homotrimer. Interacts (via both phosphorylated, unphosphorylated, active or inactive forms) with HDAC6; the interaction is necessary for the complex to interact with alpha-tubulin, suggesting that these proteins belong to a large complex that deacetylates the cytoskeleton. Interacts with FOXO1; the interaction is disrupted upon serum-starvation or oxidative stress, leading to increased level of acetylated FOXO1 and induction of autophagy. Interacts with RELA; the interaction occurs in the cytoplasm and is increased in a TNF-alpha-dependent manner. Interacts with HOXA10; the interaction is direct. Interacts with YWHAB and YWHAG; the interactions occur in a AKT-dependent manner and increase SIRT2-dependent TP53 deacetylation. Interacts with MAPK1/ERK2 and MAPK3/ERK1; the interactions increase SIRT2 stability and deacetylation activity. Interacts (phosphorylated form) with KMT5A isoform 2; the interaction is direct, stimulates KMT5A-mediated methyltransferase activity on histone at 'Lys-20' (H4K20me1) and is increased in a H(2)O(2)-induced oxidative stress-dependent manner. Interacts with G6PD; the interaction is enhanced by H(2)O(2) treatment. Interacts with a G1/S-specific cyclin E-CDK2 complex. Interacts with AURKA, CDK5R1 (p35 form) and CDK5 and HIF1A. Interacts with the tRNA ligase SARS1; recruited to the VEGFA promoter via interaction with SARS1. Interacts with BEX4; negatively regulates alpha-tubulin deacetylation by SIRT2. Interacts with MORN3; the interaction enhances the ubiquitination of p53/TP53. Requires Zn(2+) as cofactor. In terms of processing, phosphorylated at phosphoserine and phosphothreonine. Phosphorylated at Ser-331 by a mitotic kinase CDK1/cyclin B at the G2/M transition; phosphorylation regulates the delay in cell-cycle progression. Phosphorylated at Ser-331 by a mitotic kinase G1/S-specific cyclin E/Cdk2 complex; phosphorylation inactivates SIRT2-mediated alpha-tubulin deacetylation and thereby negatively regulates cell adhesion, cell migration and neurite outgrowth during neuronal differentiation. Phosphorylated by cyclin A/Cdk2 and p35-Cdk5 complexes and to a lesser extent by the cyclin D3/Cdk4 and cyclin B/Cdk1, in vitro. Dephosphorylated at Ser-331 by CDC14A and CDC14B around early anaphase. Acetylated by EP300; acetylation leads both to the decreased of SIRT2-mediated alpha-tubulin deacetylase activity and SIRT2-mediated down-regulation of TP53 transcriptional activity. Post-translationally, ubiquitinated.

It localises to the nucleus. The protein resides in the cytoplasm. It is found in the perinuclear region. Its subcellular location is the cytoskeleton. The protein localises to the microtubule organizing center. It localises to the centrosome. The protein resides in the centriole. It is found in the spindle. Its subcellular location is the midbody. The protein localises to the chromosome. It localises to the perikaryon. The protein resides in the cell projection. It is found in the growth cone. Its subcellular location is the myelin membrane. It carries out the reaction N(6)-acetyl-L-lysyl-[protein] + NAD(+) + H2O = 2''-O-acetyl-ADP-D-ribose + nicotinamide + L-lysyl-[protein]. The enzyme catalyses N(6)-tetradecanoyl-L-lysyl-[protein] + NAD(+) + H2O = 2''-O-tetradecanoyl-ADP-D-ribose + nicotinamide + L-lysyl-[protein]. It catalyses the reaction N(6)-hexadecanoyl-L-lysyl-[protein] + NAD(+) + H2O = 2''-O-hexadecanoyl-ADP-D-ribose + nicotinamide + L-lysyl-[protein]. Inhibited by Sirtinol, A3 and M15 small molecules. Inhibited by nicotinamide. Inhibited by a macrocyclic peptide inhibitor S2iL5. Inhibited by EP300-induced acetylation. Functionally, NAD-dependent protein deacetylase, which deacetylates internal lysines on histone and alpha-tubulin as well as many other proteins such as key transcription factors. Participates in the modulation of multiple and diverse biological processes such as cell cycle control, genomic integrity, microtubule dynamics, cell differentiation, metabolic networks, and autophagy. Plays a major role in the control of cell cycle progression and genomic stability. Functions in the antephase checkpoint preventing precocious mitotic entry in response to microtubule stress agents, and hence allowing proper inheritance of chromosomes. Positively regulates the anaphase promoting complex/cyclosome (APC/C) ubiquitin ligase complex activity by deacetylating CDC20 and FZR1, then allowing progression through mitosis. Associates both with chromatin at transcriptional start sites (TSSs) and enhancers of active genes. Plays a role in cell cycle and chromatin compaction through epigenetic modulation of the regulation of histone H4 'Lys-20' methylation (H4K20me1) during early mitosis. Specifically deacetylates histone H4 at 'Lys-16' (H4K16ac) between the G2/M transition and metaphase enabling H4K20me1 deposition by KMT5A leading to ulterior levels of H4K20me2 and H4K20me3 deposition throughout cell cycle, and mitotic S-phase progression. Deacetylates KMT5A modulating KMT5A chromatin localization during the mitotic stress response. Also deacetylates histone H3 at 'Lys-57' (H3K56ac) during the mitotic G2/M transition. During oocyte meiosis progression, may deacetylate histone H4 at 'Lys-16' (H4K16ac) and alpha-tubulin, regulating spindle assembly and chromosome alignment by influencing microtubule dynamics and kinetochore function. Deacetylates histone H4 at 'Lys-16' (H4K16ac) at the VEGFA promoter and thereby contributes to regulate expression of VEGFA, a key regulator of angiogenesis. Deacetylates alpha-tubulin at 'Lys-40' and hence controls neuronal motility, oligodendroglial cell arbor projection processes and proliferation of non-neuronal cells. Phosphorylation at Ser-368 by a G1/S-specific cyclin E-CDK2 complex inactivates SIRT2-mediated alpha-tubulin deacetylation, negatively regulating cell adhesion, cell migration and neurite outgrowth during neuronal differentiation. Deacetylates PARD3 and participates in the regulation of Schwann cell peripheral myelination formation during early postnatal development and during postinjury remyelination. Involved in several cellular metabolic pathways. Plays a role in the regulation of blood glucose homeostasis by deacetylating and stabilizing phosphoenolpyruvate carboxykinase PCK1 activity in response to low nutrient availability. Acts as a key regulator in the pentose phosphate pathway (PPP) by deacetylating and activating the glucose-6-phosphate G6PD enzyme, and therefore, stimulates the production of cytosolic NADPH to counteract oxidative damage. Maintains energy homeostasis in response to nutrient deprivation as well as energy expenditure by inhibiting adipogenesis and promoting lipolysis. Attenuates adipocyte differentiation by deacetylating and promoting FOXO1 interaction to PPARG and subsequent repression of PPARG-dependent transcriptional activity. Plays a role in the regulation of lysosome-mediated degradation of protein aggregates by autophagy in neuronal cells. Deacetylates FOXO1 in response to oxidative stress or serum deprivation, thereby negatively regulating FOXO1-mediated autophagy. Deacetylates a broad range of transcription factors and co-regulators regulating target gene expression. Deacetylates transcriptional factor FOXO3 stimulating the ubiquitin ligase SCF(SKP2)-mediated FOXO3 ubiquitination and degradation. Deacetylates HIF1A and therefore promotes HIF1A degradation and inhibition of HIF1A transcriptional activity in tumor cells in response to hypoxia. Deacetylates RELA in the cytoplasm inhibiting NF-kappaB-dependent transcription activation upon TNF-alpha stimulation. Inhibits transcriptional activation by deacetylating p53/TP53 and EP300. Also deacetylates EIF5A. Functions as a negative regulator on oxidative stress-tolerance in response to anoxia-reoxygenation conditions. Plays a role as tumor suppressor. In addition to protein deacetylase activity, also has activity toward long-chain fatty acyl groups and mediates protein-lysine demyristoylation and depalmitoylation of target proteins, such as ARF6 and KRAS, thereby regulating their association with membranes. In Pongo abelii (Sumatran orangutan), this protein is NAD-dependent protein deacetylase sirtuin-2 (SIRT2).